Reading from the N-terminus, the 225-residue chain is NAD(P)H-quinone oxidoreductase subunit K, chloroplastic (225 aa).

[4Fe-4S] cluster-binding residues include Cys43, Cys44, Cys108, and Cys139.

This sequence belongs to the complex I 20 kDa subunit family. In terms of assembly, NDH is composed of at least 16 different subunits, 5 of which are encoded in the nucleus. The cofactor is [4Fe-4S] cluster.

The protein resides in the plastid. It is found in the chloroplast thylakoid membrane. The enzyme catalyses a plastoquinone + NADH + (n+1) H(+)(in) = a plastoquinol + NAD(+) + n H(+)(out). The catalysed reaction is a plastoquinone + NADPH + (n+1) H(+)(in) = a plastoquinol + NADP(+) + n H(+)(out). Functionally, NDH shuttles electrons from NAD(P)H:plastoquinone, via FMN and iron-sulfur (Fe-S) centers, to quinones in the photosynthetic chain and possibly in a chloroplast respiratory chain. The immediate electron acceptor for the enzyme in this species is believed to be plastoquinone. Couples the redox reaction to proton translocation, and thus conserves the redox energy in a proton gradient. In Solanum bulbocastanum (Wild potato), this protein is NAD(P)H-quinone oxidoreductase subunit K, chloroplastic.